The primary structure comprises 152 residues: Histone H2B.1 (152 aa).

Residues 1–28 (MAPKAEKKPAAKKPAEEEPAAEKAEKTP) are compositionally biased toward basic and acidic residues. The segment at 1–60 (MAPKAEKKPAAKKPAEEEPAAEKAEKTPAGKKPKAEKRLPAGKSAAKEGGDKKGKKKAKK) is disordered. Lys7 and Lys37 each carry N6-acetyllysine. A Glycyl lysine isopeptide (Lys-Gly) (interchain with G-Cter in ubiquitin) cross-link involves residue Lys148.

Belongs to the histone H2B family. As to quaternary structure, the nucleosome is a histone octamer containing two molecules each of H2A, H2B, H3 and H4 assembled in one H3-H4 heterotetramer and two H2A-H2B heterodimers. The octamer wraps approximately 147 bp of DNA. Can be acetylated to form H2BK6ac and H2BK33ac. In terms of processing, monoubiquitinated to form H2BK143ub1; may give a specific tag for epigenetic transcriptional activation.

The protein resides in the nucleus. Its subcellular location is the chromosome. Its function is as follows. Core component of nucleosome. Nucleosomes wrap and compact DNA into chromatin, limiting DNA accessibility to the cellular machineries which require DNA as a template. Histones thereby play a central role in transcription regulation, DNA repair, DNA replication and chromosomal stability. DNA accessibility is regulated via a complex set of post-translational modifications of histones, also called histone code, and nucleosome remodeling. This is Histone H2B.1 from Triticum aestivum (Wheat).